The chain runs to 76 residues: Conotoxin Im6.9 (76 aa).

The N-terminal stretch at 1-19 is a signal peptide; the sequence is MEKLTILLLVTAVLMSTQA. Residues 20 to 45 constitute a propeptide that is removed on maturation; that stretch reads LMQSGIEKRQRAKIKFFSKRKTTAER. 3 disulfides stabilise this stretch: cysteine 51–cysteine 65, cysteine 58–cysteine 69, and cysteine 64–cysteine 73.

It belongs to the conotoxin O2 superfamily. As to expression, expressed by the venom duct.

It is found in the secreted. Functionally, probable neurotoxin. This chain is Conotoxin Im6.9, found in Conus imperialis (Imperial cone).